The chain runs to 34 residues: Photosystem II reaction center protein M (34 aa).

Residues 5-25 (ILAFIATALFVLIPTAFLIIL) traverse the membrane as a helical segment.

It belongs to the PsbM family. PSII is composed of 1 copy each of membrane proteins PsbA, PsbB, PsbC, PsbD, PsbE, PsbF, PsbH, PsbI, PsbJ, PsbK, PsbL, PsbM, PsbT, PsbX, PsbY, PsbZ, Psb30/Ycf12, at least 3 peripheral proteins of the oxygen-evolving complex and a large number of cofactors. It forms dimeric complexes.

It is found in the plastid. The protein localises to the chloroplast thylakoid membrane. Its function is as follows. One of the components of the core complex of photosystem II (PSII). PSII is a light-driven water:plastoquinone oxidoreductase that uses light energy to abstract electrons from H(2)O, generating O(2) and a proton gradient subsequently used for ATP formation. It consists of a core antenna complex that captures photons, and an electron transfer chain that converts photonic excitation into a charge separation. This subunit is found at the monomer-monomer interface. This Zygnema circumcarinatum (Green alga) protein is Photosystem II reaction center protein M.